A 72-amino-acid chain; its full sequence is Small proline-rich protein 2B (72 aa).

The span at 1 to 11 (MSYQQQQCKQP) shows a compositional bias: low complexity. Positions 1–20 (MSYQQQQCKQPCQPPPVCPT) are disordered. Repeat copies occupy residues 21-29 (PKCPEPCPP), 30-38 (PKCPEPCPP), and 39-47 (PKCPQPCPP). The tract at residues 21 to 47 (PKCPEPCPPPKCPEPCPPPKCPQPCPP) is 3 X 9 AA tandem repeats of P-K-C-P-[EQ]-P-C-P-P. The interval 42–72 (PQPCPPQQCQQKYPPVTPSPPCQPKYPPKSK) is disordered. Positions 56–72 (PVTPSPPCQPKYPPKSK) are enriched in pro residues.

This sequence belongs to the cornifin (SPRR) family. In terms of tissue distribution, suprabasal layers of squamous-differentiated tissues such as epidermis, esophagus, tongue and trachea.

Its subcellular location is the cytoplasm. In terms of biological role, cross-linked envelope protein of keratinocytes. It is a keratinocyte protein that first appears in the cell cytosol, but ultimately becomes cross-linked to membrane proteins by transglutaminase. All that results in the formation of an insoluble envelope beneath the plasma membrane. The protein is Small proline-rich protein 2B (SPRR2B) of Homo sapiens (Human).